Here is a 269-residue protein sequence, read N- to C-terminus: UPF0761 membrane protein HI_0276 (269 aa).

The next 6 membrane-spanning stretches (helical) occupy residues 32 to 52, 89 to 109, 128 to 148, 168 to 188, 203 to 223, and 232 to 252; these read MLAMVPLVMVIFSIFSAFPVF, MSAVGIVSLIAVALMLINNID, FAIYWMILTLGPLIIGVSIGI, LLSFVPFLFTWFIFTLIYTVV, FLAAIFFTLGKQAFTWYIVTF, and AMATLPIMLLWIQISWLVVLV.

It belongs to the UPF0761 family.

It is found in the cell inner membrane. The protein is UPF0761 membrane protein HI_0276 of Haemophilus influenzae (strain ATCC 51907 / DSM 11121 / KW20 / Rd).